Reading from the N-terminus, the 771-residue chain is Myotubularin-related protein 10 (771 aa).

The 441-residue stretch at 217–657 (FETYSDWDRE…THIKLWKLCY (441 aa)) folds into the Myotubularin phosphatase domain. A phosphoserine mark is found at Ser-603 and Ser-745.

It belongs to the protein-tyrosine phosphatase family. Non-receptor class myotubularin subfamily.

The polypeptide is Myotubularin-related protein 10 (Mtmr10) (Mus musculus (Mouse)).